We begin with the raw amino-acid sequence, 417 residues long: Serine hydroxymethyltransferase (417 aa).

Residues Leu-122 and 126-128 (GHL) contribute to the (6S)-5,6,7,8-tetrahydrofolate site. Position 230 is an N6-(pyridoxal phosphate)lysine (Lys-230). 355 to 357 (SPF) lines the (6S)-5,6,7,8-tetrahydrofolate pocket.

The protein belongs to the SHMT family. As to quaternary structure, homodimer. Pyridoxal 5'-phosphate is required as a cofactor.

Its subcellular location is the cytoplasm. It catalyses the reaction (6R)-5,10-methylene-5,6,7,8-tetrahydrofolate + glycine + H2O = (6S)-5,6,7,8-tetrahydrofolate + L-serine. It participates in one-carbon metabolism; tetrahydrofolate interconversion. The protein operates within amino-acid biosynthesis; glycine biosynthesis; glycine from L-serine: step 1/1. Catalyzes the reversible interconversion of serine and glycine with tetrahydrofolate (THF) serving as the one-carbon carrier. This reaction serves as the major source of one-carbon groups required for the biosynthesis of purines, thymidylate, methionine, and other important biomolecules. Also exhibits THF-independent aldolase activity toward beta-hydroxyamino acids, producing glycine and aldehydes, via a retro-aldol mechanism. The sequence is that of Serine hydroxymethyltransferase from Francisella tularensis subsp. holarctica (strain LVS).